The primary structure comprises 139 residues: ATP synthase epsilon chain (139 aa).

This sequence belongs to the ATPase epsilon chain family. In terms of assembly, F-type ATPases have 2 components, CF(1) - the catalytic core - and CF(0) - the membrane proton channel. CF(1) has five subunits: alpha(3), beta(3), gamma(1), delta(1), epsilon(1). CF(0) has three main subunits: a, b and c.

The protein resides in the cell inner membrane. Functionally, produces ATP from ADP in the presence of a proton gradient across the membrane. This Acinetobacter baylyi (strain ATCC 33305 / BD413 / ADP1) protein is ATP synthase epsilon chain.